Reading from the N-terminus, the 2290-residue chain is MKGHQFKSWIFELREIVREIKNSHYFLDSWTQFDSVGSFIHIFFHQERFRKLLDPRIFSILLLRNSQGSTSNRYFTIKGVVLFVVAALLYRINNRNMVESKNLYLKGLLPIPMNSIGPRNDTSEESFGSSNINRLIVSLLYLTKGKKISESCFRDPKESTWVLPITKKCIMPESNWSSRWWRNWIGKKRDFCCKISNETVAGIDISFKEKDIKYLEFLFVYYMDDPIRKGHDWELFDRLSPSKRRNIINLNSGQLFEILVKDWICYLMFAFREKIPIEVEGFFKQQGAGSTIQSNDIEHVSHLFSRNKWAISLQNCAQFHMWQFHQDLFVSWGKNPHESDFLRKISRENWIWLDNVWLVNKDRFFSKVRNVSSNIQYDSTRSSFVQVTDSSQLNGSSDQFIDPFDSISNEDSEYHYHTLINQREIQQLKERSILWDPSFIQTEGREIESDRFSKYLSGYSSMPRLFTEREKRMNNHLLSEESEEFLGNPTRAIRSFFSDRWSELHLGSNPTERSTRDQKLLKKEQDVSFVPSRRSENKEIVNIFKIITYLQNTVSIHPISSDLGCDMVPKDELDMDSSNKISFLNKNPFFDLFHLFHERKRGGYTLRHDFESEERFQEMADLFTLSITEPDLVYHKGFAFSIDSYGLDQRQFLKEVFNSRDESKKKSLLVLPPIFYEENESFYRRIRKNWVRISCGNYLEDPKRVVFASNNIMEAVNQYRLIRNLIQIQFQYSPYGYIRNVLNRFFLMKIPDRNFEYGIQRDLIGNDTLNHRTIMKDTINQHLSNLKKSQKKWFDPLIFLSRTERSINRDPNAYRYKWSNGSKNFQEHLEHFVSERKSRFQVVFDRLCINQYSIDWSEVIDKKDLSKSLRFFLSKLLRFFLSKLLLFLSKLLLFLSNSLPFFFVSFENIPIHRSEIHIYELKGPNDQLCNQLLESIGLQIVHLKKLKPFLLDDHNTSQKSKFLINGGTISPFLFNKIPKWMIDSFHTRKNRRKSFDNTDSYFSIVSHDQDNWLNPVKPFQRSLLISSFSKANRLRFLNNPHHFCFYCNKRFPFYVEKARLNNSDFTYGQFLTILFIHNKIFSACGGKKKHAFLERDTISPSSIESQVSNIFISNDFPQSGDERYNLYKSFHFPIRSDPLVRRAIYSIADISGTPLIKGQRVNFERTYCQTLSDMNLSDSEEKSLHQYLNFNSNMGLIHTPCSEKYLQRKKRSLCLKKCVDKGQMDRTFQRDSAFSTLSKLNLFQTYMPWFFTWTGYKYLNLIFLDTFSDLLRILSSSQKFVSIFHDIMHGLDISWRILQKKLCLPQRNLISEISSKSLHNLILSEEMIHRNNESSLISTHLRSPNVREVLYSILFLLLVAGYIVRTHLLFVSRAYSELQTEFEKIKSLMIPSYMIELRKLLDRYPTSELNSFWLKNLFLVALEQLGDCLEEIRGSGGNMLWGGDPAYGVKSIRSKKKDLKINFIDIISIIPNPINRITFSRNTRHLSHTSKEIYSLIRKRKNVSGDWIDDKIESWVANSDSIDDKEREFLVQFSTLRAEKRIDQILLSLTHSDHLSKNDSGYQMIEQPGTIYLRYLVDIHKKYLMNYEFNTSCLAERRIFLAHYQTITYSQTSCGANSFHFPSHGKPFSLRLALSPSRSILVIGSIGTGRSYLVKYLATNSYVPFITVFLNKFLDNKPKGFFIDDIDIDDSDDIDASNDIDRELDTELELLTMMNALTMDMMSEIDLFYITLQFELAKAMSPCIIWIPNIHDLDVNESNYLALGLLVNSLSRDCERCSTRNILVIASTHIPQKVDPALIAPNKLNTCIKIRRLLIPQQRKHFFTLSYTRGFHLEKKMFHTNGFESITMGSSARDLVALTNEALSISITQKKSIIDTNTIRSALHRQTWDLRSQVRSVQDHGILFYQIGRAVAQNVLISNCPIDPISIYMKKKSCNEGDSYLYKWYFELGTSMKKFTILLYLLSCSAGSVAQDLWSLPGPDEKNRITSYGFIENDSDLVHGLLEVQGALVGSSRTEKDCSQFDNDRVTLLFRSEPRDPLYMMQDGSCSIVDQRFLYEKYESEFEEGEGEGVLDPQQIEEDLFNHIVWAPRIWRPRGFLFDCIERPNELGFPYLAGSFRGKRIIYDEKYELQENDSEFLQSGTMQYQRRDRSSKEQGFFRISQFIWDPADPLFFLFKDQPFVSVFSHREFFADEEMSKGLLTSQTDPPTSIYKRWFIKNTQEKHFELLIQRQRWLRTNSSLSNGFFRSNTRSESYQYLSNLFLSNGTLLDRMTKTLLKKRWLFPDEMKIGFM.

G1644–S1651 provides a ligand contact to ATP.

Belongs to the Ycf2 family.

It localises to the plastid. It is found in the chloroplast stroma. Functionally, probable ATPase of unknown function. Its presence in a non-photosynthetic plant (Epifagus virginiana) and experiments in tobacco indicate that it has an essential function which is probably not related to photosynthesis. This chain is Protein Ycf2, found in Barbarea verna (Land cress).